Here is a 142-residue protein sequence, read N- to C-terminus: Large ribosomal subunit protein uL13 (142 aa).

Belongs to the universal ribosomal protein uL13 family. Part of the 50S ribosomal subunit.

In terms of biological role, this protein is one of the early assembly proteins of the 50S ribosomal subunit, although it is not seen to bind rRNA by itself. It is important during the early stages of 50S assembly. The protein is Large ribosomal subunit protein uL13 of Syntrophobacter fumaroxidans (strain DSM 10017 / MPOB).